The primary structure comprises 171 residues: Neuronal vesicle trafficking-associated protein 2 (171 aa).

Residues Met-1–Gly-21 form a disordered region. Topologically, residues Met-1–Thr-71 are cytoplasmic. The chain crosses the membrane as a helical; Signal-anchor for type II membrane protein span at residues Val-72–Tyr-92. Residues Lys-93–His-171 are Lumenal-facing.

This sequence belongs to the NSG family.

The protein resides in the membrane. It is found in the golgi apparatus. It localises to the trans-Golgi network membrane. Its subcellular location is the cell projection. The protein localises to the dendrite. The protein resides in the endosome membrane. It is found in the early endosome membrane. It localises to the late endosome membrane. Its subcellular location is the lysosome lumen. The protein localises to the cytoplasmic vesicle membrane. The protein resides in the golgi stack membrane. It is found in the endosome. It localises to the multivesicular body membrane. This Bos taurus (Bovine) protein is Neuronal vesicle trafficking-associated protein 2.